A 303-amino-acid chain; its full sequence is Peroxisomal trans-2-enoyl-CoA reductase (303 aa).

23–47 (VTGGATGIGKAIVKELLELGSNVVI) contacts NADP(+). Lysine 32 is subject to N6-succinyllysine. Serine 49 is subject to Phosphoserine. Tyrosine 179 acts as the Proton acceptor in catalysis. Tyrosine 179 bears the Phosphotyrosine mark. Positions 301 to 303 (AKL) match the Microbody targeting signal motif.

This sequence belongs to the short-chain dehydrogenases/reductases (SDR) family. In terms of assembly, interacts with PEX5, probably required to target it into peroxisomes.

It localises to the peroxisome. It carries out the reaction a (2E)-enoyl-CoA + NADPH + H(+) = a 2,3-saturated acyl-CoA + NADP(+). It catalyses the reaction (2E)-decenoyl-CoA + NADPH + H(+) = decanoyl-CoA + NADP(+). The catalysed reaction is (2E)-hexenoyl-CoA + NADPH + H(+) = hexanoyl-CoA + NADP(+). The enzyme catalyses (2E)-octenoyl-CoA + NADPH + H(+) = octanoyl-CoA + NADP(+). It carries out the reaction (2E)-dodecenoyl-CoA + NADPH + H(+) = dodecanoyl-CoA + NADP(+). It catalyses the reaction (2E)-tetradecenoyl-CoA + NADPH + H(+) = tetradecanoyl-CoA + NADP(+). Its pathway is lipid metabolism; fatty acid biosynthesis. In terms of biological role, participates in chain elongation of fatty acids. Catalyzes the reduction of trans-2-enoyl-CoAs of varying chain lengths from 6:1 to 16:1, having maximum activity with 10:1 CoA. Has no 2,4-dienoyl-CoA reductase activity. This Homo sapiens (Human) protein is Peroxisomal trans-2-enoyl-CoA reductase.